The sequence spans 115 residues: Large ribosomal subunit protein bL20 (115 aa).

The protein belongs to the bacterial ribosomal protein bL20 family.

Its function is as follows. Binds directly to 23S ribosomal RNA and is necessary for the in vitro assembly process of the 50S ribosomal subunit. It is not involved in the protein synthesizing functions of that subunit. This is Large ribosomal subunit protein bL20 from Synechococcus sp. (strain CC9605).